Consider the following 453-residue polypeptide: Cysteine desulfurase, mitochondrial (453 aa).

Residues methionine 1–threonine 34 constitute a mitochondrion transit peptide. Residues alanine 123–threonine 124, asparagine 203, glutamine 231, and serine 251–histidine 253 each bind pyridoxal 5'-phosphate. Lysine 254 is modified (N6-(pyridoxal phosphate)lysine). Threonine 291 lines the pyridoxal 5'-phosphate pocket. Residue cysteine 377 is the Cysteine persulfide intermediate of the active site. Residue cysteine 377 participates in [2Fe-2S] cluster binding.

It belongs to the class-V pyridoxal-phosphate-dependent aminotransferase family. NifS/IscS subfamily. In terms of assembly, interacts with FH. Interacts with SUFE1. The cofactor is pyridoxal 5'-phosphate.

Its subcellular location is the mitochondrion. The enzyme catalyses (sulfur carrier)-H + L-cysteine = (sulfur carrier)-SH + L-alanine. With respect to regulation, threefold increase in the catalytic activity in the presence of FH (frataxin). 30-fold increase in the catalytic activity in the presence of SUFE1. Catalyzes the removal of elemental sulfur from cysteine to produce alanine. Supplies the inorganic sulfur for iron-sulfur (Fe-S) clusters. The polypeptide is Cysteine desulfurase, mitochondrial (Arabidopsis thaliana (Mouse-ear cress)).